The chain runs to 368 residues: tRNA 2-selenouridine synthase (368 aa).

Positions 15-138 (FLNQHPIMDV…LRQYLIGVIE (124 aa)) constitute a Rhodanese domain. Catalysis depends on Cys-98, which acts as the S-selanylcysteine intermediate.

The protein belongs to the SelU family. Monomer.

It catalyses the reaction 5-methylaminomethyl-2-thiouridine(34) in tRNA + selenophosphate + (2E)-geranyl diphosphate + H2O + H(+) = 5-methylaminomethyl-2-selenouridine(34) in tRNA + (2E)-thiogeraniol + phosphate + diphosphate. The enzyme catalyses 5-methylaminomethyl-2-thiouridine(34) in tRNA + (2E)-geranyl diphosphate = 5-methylaminomethyl-S-(2E)-geranyl-thiouridine(34) in tRNA + diphosphate. It carries out the reaction 5-methylaminomethyl-S-(2E)-geranyl-thiouridine(34) in tRNA + selenophosphate + H(+) = 5-methylaminomethyl-2-(Se-phospho)selenouridine(34) in tRNA + (2E)-thiogeraniol. The catalysed reaction is 5-methylaminomethyl-2-(Se-phospho)selenouridine(34) in tRNA + H2O = 5-methylaminomethyl-2-selenouridine(34) in tRNA + phosphate. Involved in the post-transcriptional modification of the uridine at the wobble position (U34) of tRNA(Lys), tRNA(Glu) and tRNA(Gln). Catalyzes the conversion of 2-thiouridine (S2U-RNA) to 2-selenouridine (Se2U-RNA). Acts in a two-step process involving geranylation of 2-thiouridine (S2U) to S-geranyl-2-thiouridine (geS2U) and subsequent selenation of the latter derivative to 2-selenouridine (Se2U) in the tRNA chain. This Shewanella baltica (strain OS223) protein is tRNA 2-selenouridine synthase.